A 479-amino-acid polypeptide reads, in one-letter code: Aspartyl/glutamyl-tRNA(Asn/Gln) amidotransferase subunit B (479 aa).

This sequence belongs to the GatB/GatE family. GatB subfamily. As to quaternary structure, heterotrimer of A, B and C subunits.

The catalysed reaction is L-glutamyl-tRNA(Gln) + L-glutamine + ATP + H2O = L-glutaminyl-tRNA(Gln) + L-glutamate + ADP + phosphate + H(+). It catalyses the reaction L-aspartyl-tRNA(Asn) + L-glutamine + ATP + H2O = L-asparaginyl-tRNA(Asn) + L-glutamate + ADP + phosphate + 2 H(+). Functionally, allows the formation of correctly charged Asn-tRNA(Asn) or Gln-tRNA(Gln) through the transamidation of misacylated Asp-tRNA(Asn) or Glu-tRNA(Gln) in organisms which lack either or both of asparaginyl-tRNA or glutaminyl-tRNA synthetases. The reaction takes place in the presence of glutamine and ATP through an activated phospho-Asp-tRNA(Asn) or phospho-Glu-tRNA(Gln). The sequence is that of Aspartyl/glutamyl-tRNA(Asn/Gln) amidotransferase subunit B from Halorhodospira halophila (strain DSM 244 / SL1) (Ectothiorhodospira halophila (strain DSM 244 / SL1)).